We begin with the raw amino-acid sequence, 349 residues long: Alanine racemase (349 aa).

The active-site Proton acceptor; specific for D-alanine is the K35. An N6-(pyridoxal phosphate)lysine modification is found at K35. Residue R130 coordinates substrate. Residue Y244 is the Proton acceptor; specific for L-alanine of the active site. Position 292 (M292) interacts with substrate.

The protein belongs to the alanine racemase family. Pyridoxal 5'-phosphate serves as cofactor.

The catalysed reaction is L-alanine = D-alanine. The protein operates within amino-acid biosynthesis; D-alanine biosynthesis; D-alanine from L-alanine: step 1/1. Catalyzes the interconversion of L-alanine and D-alanine. May also act on other amino acids. The protein is Alanine racemase (alr) of Dinoroseobacter shibae (strain DSM 16493 / NCIMB 14021 / DFL 12).